Here is an 876-residue protein sequence, read N- to C-terminus: Valine--tRNA ligase (876 aa).

Positions Pro-44–His-54 match the 'HIGH' region motif. A 'KMSKS' region motif is present at residues Lys-520–Ser-524. Lys-523 is a binding site for ATP. Residues Leu-805 to Ala-876 adopt a coiled-coil conformation.

This sequence belongs to the class-I aminoacyl-tRNA synthetase family. ValS type 1 subfamily. Monomer.

The protein localises to the cytoplasm. The catalysed reaction is tRNA(Val) + L-valine + ATP = L-valyl-tRNA(Val) + AMP + diphosphate. Catalyzes the attachment of valine to tRNA(Val). As ValRS can inadvertently accommodate and process structurally similar amino acids such as threonine, to avoid such errors, it has a 'posttransfer' editing activity that hydrolyzes mischarged Thr-tRNA(Val) in a tRNA-dependent manner. The polypeptide is Valine--tRNA ligase (Staphylococcus carnosus (strain TM300)).